The primary structure comprises 237 residues: Concanavalin-A (237 aa).

Mn(2+) is bound by residues glutamate 8 and aspartate 10. Ca(2+)-binding residues include aspartate 10, tyrosine 12, asparagine 14, and aspartate 19. Asparagine 14 contacts a carbohydrate. The Mn(2+) site is built by aspartate 19 and histidine 24. Residues 98 to 100 (GLY), aspartate 208, and arginine 228 each bind a carbohydrate.

The protein belongs to the leguminous lectin family. As to quaternary structure, homotetramer. Post-translationally, concanavalin A-like lectins of the Diocleinae subtribe undergo proteolytic processing referred to as circular permutation. The propeptide is split into an N-terminal and a C-terminal part, the gamma and beta chain, respectively. These are then religated in beta-gamma order to form the mature alpha chain. The beta and gamma chains can often be detected in cell extracts. Residues 1-118 of the mature chain, as displayed here, probably constitute the beta chain in the propeptide, residues 119-237 the gamma chain.

Glucose/D-mannose specific lectin. In Canavalia cathartica (Jackbean), this protein is Concanavalin-A.